We begin with the raw amino-acid sequence, 159 residues long: Probable epoxidase scpX (159 aa).

The first 25 residues, 1–25 (MATLIRLLRLLPVASSSAVLMFALD), serve as a signal peptide directing secretion. 2 consecutive transmembrane segments (helical) span residues 59–79 (WVLI…LFIS) and 96–116 (LLFS…IAAI). N-linked (GlcNAc...) asparagine glycans are attached at residues N124 and N136. Residues 139-159 (RALLTDLPAWLCFIAAALKAL) form a helical membrane-spanning segment.

This sequence belongs to the epoxidase xenD family.

It localises to the membrane. The protein operates within mycotoxin biosynthesis. Its function is as follows. Probable epoxidase; part of the gene scp cluster that mediates the biosynthesis of a hirsutellone-like compound that has still to be identified. The protein is Probable epoxidase scpX of Mollisia scopiformis (Conifer needle endophyte fungus).